The sequence spans 282 residues: E3 ubiquitin-protein ligase RNF217 (282 aa).

The interval 1–218 is TRIAD supradomain; sequence MSCRVCLEDR…LSIFGCKYRY (218 aa). Zn(2+) is bound by residues Cys3, Cys6, Cys23, Cys26, Cys123, Cys126, His131, Cys136, Cys163, and Cys166. The segment at 3-49 adopts an RING-type 1 zinc-finger fold; sequence CRVCLEDRSIKPLPCCKKPVCDECLKRYLSSQVQLGQAEIQCPITEC. The segment at 68–136 adopts an IBR-type zinc-finger fold; the sequence is IKYKYFLELS…HAPWHEGVNC (69 aa). The RING-type 2; atypical zinc-finger motif lies at 163–192; the sequence is CPRCKVHIQRTEGCDHMTCSQCNTNFCYRC. Cys176 is a catalytic residue. The Zn(2+) site is built by Cys181, Cys184, Cys189, Cys192, His205, and Cys214. Residues 243-263 traverse the membrane as a helical segment; the sequence is LLIVLGLVLGALAVVIGLFGL.

The protein belongs to the RBR family. RNF217 subfamily.

The protein localises to the cytoplasm. Its subcellular location is the membrane. It catalyses the reaction [E2 ubiquitin-conjugating enzyme]-S-ubiquitinyl-L-cysteine + [acceptor protein]-L-lysine = [E2 ubiquitin-conjugating enzyme]-L-cysteine + [acceptor protein]-N(6)-ubiquitinyl-L-lysine.. Its pathway is protein modification; protein ubiquitination. Functionally, E3 ubiquitin-protein ligase which accepts ubiquitin from E2 ubiquitin-conjugating enzymes in the form of a thioester and then directly transfers the ubiquitin to targeted substrates. Mediates the degradation of the iron exporter ferroportin/SLC40A1 and thus regulates iron homeostasis. The protein is E3 ubiquitin-protein ligase RNF217 (rnf217) of Xenopus laevis (African clawed frog).